The chain runs to 718 residues: Putative proline-rich receptor-like protein kinase PERK11 (718 aa).

The tract at residues 1–256 is disordered; sequence MDKVQQQADL…GGTSQQSNES (256 aa). The Extracellular segment spans residues 1–262; sequence MDKVQQQADL…SNESNYTEKT (262 aa). Pro residues-rich tracts occupy residues 45 to 105, 115 to 132, and 157 to 167; these read ATSP…PPQS, IPFPKPQLPPPSLFPPPS, and LPSPPSTPFSP. 2 stretches are compositionally biased toward low complexity: residues 168–203 and 211–244; these read PSQENSGSQGSPPLSSLLPPMLPLNPNSPGNPLQPL and SNRVPSSSSSPSPPSLSGSNNHSGGSNRHNANSN. N231, N254, and N257 each carry an N-linked (GlcNAc...) asparagine glycan. The helical transmembrane segment at 263–283 threads the bilayer; that stretch reads VIGIGIAGVLVILFIAGVFFV. The Cytoplasmic portion of the chain corresponds to 284-718; the sequence is RRKQKKGSSS…RAFNTSHRNH (435 aa). The tract at residues 314–348 is disordered; sequence HYRQKPGNGNSSAQNSSPDTNSLGNPKHGRGTPDS. A compositionally biased stretch (polar residues) spans 320-337; sequence GNGNSSAQNSSPDTNSLG. At T359 the chain carries Phosphothreonine. The 280-residue stretch at 370 to 649 folds into the Protein kinase domain; sequence FCKSFVVGEG…VRALDTRDDL (280 aa). Residues 376–384 and K398 contribute to the ATP site; that span reads VGEGGFGCV. Y443 bears the Phosphotyrosine mark. D494 acts as the Proton acceptor in catalysis. Residues S498 and S527 each carry the phosphoserine modification. Phosphothreonine is present on residues T528 and T533. Position 541 is a phosphotyrosine (Y541). The segment at 683–718 is disordered; it reads SSDLGTNTGYYPSQDYATSHEYESESRAFNTSHRNH. Polar residues-rich tracts occupy residues 685–699 and 709–718; these read DLGTNTGYYPSQDYA and RAFNTSHRNH.

This sequence belongs to the protein kinase superfamily. Ser/Thr protein kinase family. Mostly expressed in flower buds.

It localises to the cell membrane. The catalysed reaction is L-seryl-[protein] + ATP = O-phospho-L-seryl-[protein] + ADP + H(+). It carries out the reaction L-threonyl-[protein] + ATP = O-phospho-L-threonyl-[protein] + ADP + H(+). The polypeptide is Putative proline-rich receptor-like protein kinase PERK11 (PERK11) (Arabidopsis thaliana (Mouse-ear cress)).